An 872-amino-acid polypeptide reads, in one-letter code: Chaperone protein ClpB 2 (872 aa).

Positions 6-148 constitute a Clp R domain; it reads PNQFTEKAWE…KNIIKQVRGS (143 aa). 2 repeat regions span residues 9 to 73 and 85 to 148; these read FTEK…IQRQ and LGRS…VRGS. An NBD1 region spans residues 161–342; that stretch reads QSLEKYGRDL…RRFQQVYVDQ (182 aa). 208–215 serves as a coordination point for ATP; that stretch reads GEPGVGKT. Positions 343–551 are linker; that stretch reads PSVEDTISIL…IAEIISKWTG (209 aa). Residues 393–527 adopt a coiled-coil conformation; sequence IDLVDEAAAR…TERELSQTQG (135 aa). An NBD2 region spans residues 561–772; it reads EKEKLLHLED…RIDEVIIFHS (212 aa). Residue 611–618 coordinates ATP; the sequence is GPTGVGKT. Positions 773-872 are C-terminal; it reads LDKKELRQIV…SRLPVEVFSS (100 aa).

It belongs to the ClpA/ClpB family. Homohexamer. The oligomerization is ATP-dependent.

It localises to the cytoplasm. Functionally, part of a stress-induced multi-chaperone system, it is involved in the recovery of the cell from heat-induced damage, in cooperation with DnaK, DnaJ and GrpE. Acts before DnaK, in the processing of protein aggregates. Protein binding stimulates the ATPase activity; ATP hydrolysis unfolds the denatured protein aggregates, which probably helps expose new hydrophobic binding sites on the surface of ClpB-bound aggregates, contributing to the solubilization and refolding of denatured protein aggregates by DnaK. The polypeptide is Chaperone protein ClpB 2 (clpB2) (Nostoc sp. (strain PCC 7120 / SAG 25.82 / UTEX 2576)).